The chain runs to 314 residues: DNA-directed RNA polymerase subunit alpha (314 aa).

Positions 1-228 are alpha N-terminal domain (alpha-NTD); that stretch reads MIEIEKPRIE…EHLNIFVSLT (228 aa). Residues 245–314 are alpha C-terminal domain (alpha-CTD); it reads KEKVLEMSIE…DLGLGLRKED (70 aa).

The protein belongs to the RNA polymerase alpha chain family. Homodimer. The RNAP catalytic core consists of 2 alpha, 1 beta, 1 beta' and 1 omega subunit. When a sigma factor is associated with the core the holoenzyme is formed, which can initiate transcription.

It catalyses the reaction RNA(n) + a ribonucleoside 5'-triphosphate = RNA(n+1) + diphosphate. Functionally, DNA-dependent RNA polymerase catalyzes the transcription of DNA into RNA using the four ribonucleoside triphosphates as substrates. This is DNA-directed RNA polymerase subunit alpha from Staphylococcus epidermidis (strain ATCC 35984 / DSM 28319 / BCRC 17069 / CCUG 31568 / BM 3577 / RP62A).